A 59-amino-acid polypeptide reads, in one-letter code: MSALYNLIFRNNTAFVGAVFAGAFAFELAYDNGMDKVWDKINKGRQWKDIRHKYVEAEE.

The Mitochondrial matrix portion of the chain corresponds to 1–15; sequence MSALYNLIFRNNTAF. Residues 16-41 form a helical membrane-spanning segment; that stretch reads VGAVFAGAFAFELAYDNGMDKVWDKI. The Mitochondrial intermembrane segment spans residues 42 to 59; it reads NKGRQWKDIRHKYVEAEE.

The protein belongs to the UQCR10/QCR9 family. As to quaternary structure, component of the ubiquinol-cytochrome c oxidoreductase (cytochrome b-c1 complex, complex III, CIII), a multisubunit enzyme composed of 10 subunits. The complex is composed of 3 respiratory subunits cytochrome b (cob), cytochrome c1 (cyt-1) and Rieske protein (fes-1), 2 core protein subunits pep and ucr-1, and 5 low-molecular weight protein subunits qcr6, qcr7, qcr8, qcr9 and probably NCU16844/qcr10. The complex exists as an obligatory dimer and forms supercomplexes (SCs) in the inner mitochondrial membrane with NADH-ubiquinone oxidoreductase (complex I, CI) and cytochrome c oxidase (complex IV, CIV), resulting in different assemblies (supercomplexes SCI(1)III(2), SCIII(2)IV(1) and SCIII(2)IV(2) as well as higher order I(x)III(y)IV(z) megacomplexes).

It is found in the mitochondrion inner membrane. Functionally, component of the ubiquinol-cytochrome c oxidoreductase, a multisubunit transmembrane complex that is part of the mitochondrial electron transport chain which drives oxidative phosphorylation. The respiratory chain contains 3 multisubunit complexes succinate dehydrogenase (complex II, CII), ubiquinol-cytochrome c oxidoreductase (cytochrome b-c1 complex, complex III, CIII) and cytochrome c oxidase (complex IV, CIV), that cooperate to transfer electrons derived from NADH and succinate to molecular oxygen, creating an electrochemical gradient over the inner membrane that drives transmembrane transport and the ATP synthase. The cytochrome b-c1 complex catalyzes electron transfer from ubiquinol to cytochrome c, linking this redox reaction to translocation of protons across the mitochondrial inner membrane, with protons being carried across the membrane as hydrogens on the quinol. In the process called Q cycle, 2 protons are consumed from the matrix, 4 protons are released into the intermembrane space and 2 electrons are passed to cytochrome c. The chain is Cytochrome b-c1 complex subunit 9, mitochondrial (qcr9) from Neurospora crassa (strain ATCC 24698 / 74-OR23-1A / CBS 708.71 / DSM 1257 / FGSC 987).